The chain runs to 293 residues: Ribosomal RNA small subunit methyltransferase H (293 aa).

S-adenosyl-L-methionine-binding positions include 32–34 (GGH), D51, F78, D99, and Q106. Residues 272 to 293 (SDEEIKENPASRSAKLRVGRRI) form a disordered region.

It belongs to the methyltransferase superfamily. RsmH family.

The protein localises to the cytoplasm. The enzyme catalyses cytidine(1402) in 16S rRNA + S-adenosyl-L-methionine = N(4)-methylcytidine(1402) in 16S rRNA + S-adenosyl-L-homocysteine + H(+). In terms of biological role, specifically methylates the N4 position of cytidine in position 1402 (C1402) of 16S rRNA. This Sulfurihydrogenibium sp. (strain YO3AOP1) protein is Ribosomal RNA small subunit methyltransferase H.